Reading from the N-terminus, the 549-residue chain is 4-hydroxybutyrate--CoA ligase 2 (549 aa).

Residues 195 to 203 (TSGTTGLPK), 336 to 341 (ETYGPH), D425, and R440 contribute to the ATP site. CoA is bound by residues 448-450 (GGE), K506, and 514-516 (CPK). K530 contacts ATP.

The protein belongs to the ATP-dependent AMP-binding enzyme family. Requires Mg(2+) as cofactor. It depends on Mn(2+) as a cofactor.

The enzyme catalyses 4-hydroxybutanoate + ATP + CoA = 4-hydroxybutanoyl-CoA + AMP + diphosphate. It carries out the reaction acetate + ATP + CoA = acetyl-CoA + AMP + diphosphate. The catalysed reaction is propanoate + ATP + CoA = propanoyl-CoA + AMP + diphosphate. It catalyses the reaction a medium-chain fatty acid + ATP + CoA = a medium-chain fatty acyl-CoA + AMP + diphosphate. Its function is as follows. Catalyzes the ligation of coenzyme A (CoA) to 4-hydroxybutyrate (4HB). It can also use butyrate, valerate, propionate, acetate and 3-hydroxybutyrate (3HB) as substrates. This Metallosphaera sedula (strain ATCC 51363 / DSM 5348 / JCM 9185 / NBRC 15509 / TH2) protein is 4-hydroxybutyrate--CoA ligase 2.